The sequence spans 167 residues: Gem-associated protein 6 (167 aa).

The Sm domain occupies 7–74; sequence KGPLEWQDYI…VQTVETMNEG (68 aa). The AD domain maps to 69–167; it reads ETMNEGDHRV…LIEGHLTASQ (99 aa). S95 and S166 each carry phosphoserine.

As to quaternary structure, part of the core SMN complex that contains SMN1, GEMIN2/SIP1, DDX20/GEMIN3, GEMIN4, GEMIN5, GEMIN6, GEMIN7, GEMIN8 and STRAP/UNRIP. Part of the SMN-Sm complex that contains SMN1, GEMIN2/SIP1, DDX20/GEMIN3, GEMIN4, GEMIN5, GEMIN6, GEMIN7, GEMIN8, STRAP/UNRIP and the Sm proteins SNRPB, SNRPD1, SNRPD2, SNRPD3, SNRPE, SNRPF and SNRPG. Interacts with GEMIN7; the interaction is direct. Interacts with GEMIN8; the interaction is direct. Interacts with SNRPB, SNRPD2, SNRPD3 and SNRPE; the interaction is direct.

The protein localises to the nucleus. It is found in the nucleoplasm. It localises to the gem. Its subcellular location is the cytoplasm. Its function is as follows. The SMN complex catalyzes the assembly of small nuclear ribonucleoproteins (snRNPs), the building blocks of the spliceosome, and thereby plays an important role in the splicing of cellular pre-mRNAs. Most spliceosomal snRNPs contain a common set of Sm proteins SNRPB, SNRPD1, SNRPD2, SNRPD3, SNRPE, SNRPF and SNRPG that assemble in a heptameric protein ring on the Sm site of the small nuclear RNA to form the core snRNP (Sm core). In the cytosol, the Sm proteins SNRPD1, SNRPD2, SNRPE, SNRPF and SNRPG are trapped in an inactive 6S pICln-Sm complex by the chaperone CLNS1A that controls the assembly of the core snRNP. To assemble core snRNPs, the SMN complex accepts the trapped 5Sm proteins from CLNS1A forming an intermediate. Binding of snRNA inside 5Sm triggers eviction of the SMN complex, thereby allowing binding of SNRPD3 and SNRPB to complete assembly of the core snRNP. In Homo sapiens (Human), this protein is Gem-associated protein 6 (GEMIN6).